Consider the following 275-residue polypeptide: Elongation factor Ts (275 aa).

The tract at residues 76–79 is involved in Mg(2+) ion dislocation from EF-Tu; the sequence is TDFV.

It belongs to the EF-Ts family.

Its subcellular location is the cytoplasm. In terms of biological role, associates with the EF-Tu.GDP complex and induces the exchange of GDP to GTP. It remains bound to the aminoacyl-tRNA.EF-Tu.GTP complex up to the GTP hydrolysis stage on the ribosome. This is Elongation factor Ts from Rhodococcus opacus (strain B4).